Reading from the N-terminus, the 361-residue chain is 3,6-anhydro-alpha-L-galactonate cycloisomerase (361 aa).

Catalysis depends on Lys166, which acts as the Proton acceptor. 3 residues coordinate Mg(2+): Asp195, Glu221, and Glu247. The active-site Proton donor/acceptor is His297.

This sequence belongs to the mandelate racemase/muconate lactonizing enzyme family. Mg(2+) serves as cofactor.

The enzyme catalyses 3,6-anhydro-L-galactonate = 2-dehydro-3-deoxy-L-galactonate. Its function is as follows. Involved in the degradation of 3,6-anhydro-L-galactose, which is the major monomeric sugar of red macroalgae. Catalyzes the isomerization of 3,6-anhydrogalactonate (AHGA) to 2-keto-3-deoxy-galactonate (KDGal). The protein is 3,6-anhydro-alpha-L-galactonate cycloisomerase of Streptomyces coelicolor (strain ATCC BAA-471 / A3(2) / M145).